Consider the following 462-residue polypeptide: Cysteine--tRNA ligase (462 aa).

Cys-29 serves as a coordination point for Zn(2+). The 'HIGH' region signature appears at 31–41 (MTVYDLCHLGH). Cys-217, His-242, and Glu-246 together coordinate Zn(2+). Positions 274–278 (KMSKS) match the 'KMSKS' region motif. Residue Lys-277 coordinates ATP.

This sequence belongs to the class-I aminoacyl-tRNA synthetase family. As to quaternary structure, monomer. The cofactor is Zn(2+).

It is found in the cytoplasm. The enzyme catalyses tRNA(Cys) + L-cysteine + ATP = L-cysteinyl-tRNA(Cys) + AMP + diphosphate. The polypeptide is Cysteine--tRNA ligase (Polaromonas sp. (strain JS666 / ATCC BAA-500)).